The sequence spans 465 residues: Pancreatic triacylglycerol lipase (465 aa).

The N-terminal stretch at 1 to 16 (MLMLWTFAVLLGAVAG) is a signal peptide. Disulfide bonds link Cys20–Cys26 and Cys107–Cys118. The active-site Nucleophile is the Ser169. Asp193 serves as the catalytic Charge relay system. Ca(2+) contacts are provided by Glu204, Arg207, Asp209, and Asp212. The cysteines at positions 254 and 278 are disulfide-linked. His280 functions as the Charge relay system in the catalytic mechanism. Cystine bridges form between Cys302–Cys313, Cys316–Cys321, and Cys449–Cys465. Residues 355-465 (WRYQVTVTLS…EDVLLTLSPC (111 aa)) enclose the PLAT domain.

Belongs to the AB hydrolase superfamily. Lipase family. Forms a 1:1 stoichiometric complex with (pro)colipase/CLPS. In terms of tissue distribution, pancreas.

Its subcellular location is the secreted. The enzyme catalyses a triacylglycerol + H2O = a diacylglycerol + a fatty acid + H(+). It carries out the reaction 1,2,3-tri-(9Z-octadecenoyl)-glycerol + H2O = di-(9Z)-octadecenoylglycerol + (9Z)-octadecenoate + H(+). It catalyses the reaction 1,2,3-tributanoylglycerol + H2O = dibutanoylglycerol + butanoate + H(+). The catalysed reaction is all-trans-retinyl hexadecanoate + H2O = all-trans-retinol + hexadecanoate + H(+). The enzyme catalyses 1,2-di-(9Z-octadecenoyl)-glycerol + H2O = (9Z-octadecenoyl)-glycerol + (9Z)-octadecenoate + H(+). Inhibited by bile salts, is reactivated by (pro)colipase/CLPS. In terms of biological role, plays an important role in fat metabolism. It preferentially splits the esters of long-chain fatty acids at positions 1 and 3, producing mainly 2-monoacylglycerol and free fatty acids, and shows considerably higher activity against insoluble emulsified substrates than against soluble ones. The sequence is that of Pancreatic triacylglycerol lipase from Mus musculus (Mouse).